The sequence spans 498 residues: WD repeat-containing protein 55 homolog (498 aa).

The disordered stretch occupies residues 1–131 (MHTHNNFKTP…ATFDLDEDDE (131 aa)). Acidic residues-rich tracts occupy residues 12 to 23 (DEDELDDLDEDM) and 31 to 48 (IEQEVLNESDSDNDEYDL). Low complexity-rich tracts occupy residues 67 to 82 (NDSSSSDDSFDPNAAD) and 93 to 103 (AGGVTAGGATS). WD repeat units follow at residues 154-193 (KLEDFITDICFHPDRDIIALATIIGDVHLYEYDNEANKLL), 198-237 (VHSKACRDVEFTEDGRFLLTCSKDKCVMVTDMETEKLKKL), 241-279 (AHDDAINTLHVLNENLFASGDDAGTVKLWDLRTKNAIFE), 282-321 (ELEDQITQLTTNEQSKLLLATSADGYLTTFNISARKMYVQ), 324-363 (PYEEELNCMGVYRGDSKLVVGTSKGRLYTYNWGQFGYHCD), and 408-447 (QHNMPIESLDVNASGELIASSSHNNDVRFWNVKYFEDFGD). Residues 478 to 498 (DLTKENADGDDDPGAGPSNMA) are disordered.

The protein belongs to the WD repeat WDR55 family.

The protein is WD repeat-containing protein 55 homolog of Drosophila melanogaster (Fruit fly).